We begin with the raw amino-acid sequence, 197 residues long: Adenylyl-sulfate kinase (197 aa).

31-38 (GLSGAGKS) contacts ATP. The Phosphoserine intermediate role is filled by S105.

It belongs to the APS kinase family.

The catalysed reaction is adenosine 5'-phosphosulfate + ATP = 3'-phosphoadenylyl sulfate + ADP + H(+). The protein operates within sulfur metabolism; hydrogen sulfide biosynthesis; sulfite from sulfate: step 2/3. In terms of biological role, catalyzes the synthesis of activated sulfate. The protein is Adenylyl-sulfate kinase of Aeromonas hydrophila subsp. hydrophila (strain ATCC 7966 / DSM 30187 / BCRC 13018 / CCUG 14551 / JCM 1027 / KCTC 2358 / NCIMB 9240 / NCTC 8049).